Consider the following 69-residue polypeptide: ATP synthase protein 8 (69 aa).

Residues 8–24 (TWTLTISLMIISLFCIY) form a helical membrane-spanning segment. N6-acetyllysine; alternate is present on Lys55. Lys55 is subject to N6-succinyllysine; alternate. Lys58 is subject to N6-acetyllysine.

It belongs to the ATPase protein 8 family. As to quaternary structure, F-type ATPases have 2 components, CF(1) - the catalytic core - and CF(0) - the membrane proton channel. Component of an ATP synthase complex composed of ATP5PB, ATP5MC1, ATP5F1E, ATP5PD, ATP5ME, ATP5PF, ATP5MF, MT-ATP6, MT-ATP8, ATP5F1A, ATP5F1B, ATP5F1D, ATP5F1C, ATP5PO, ATP5MG, ATP5MK and ATP5MJ. Interacts with PRICKLE3.

It localises to the mitochondrion membrane. In terms of biological role, mitochondrial membrane ATP synthase (F(1)F(0) ATP synthase or Complex V) produces ATP from ADP in the presence of a proton gradient across the membrane which is generated by electron transport complexes of the respiratory chain. F-type ATPases consist of two structural domains, F(1) - containing the extramembraneous catalytic core and F(0) - containing the membrane proton channel, linked together by a central stalk and a peripheral stalk. During catalysis, ATP synthesis in the catalytic domain of F(1) is coupled via a rotary mechanism of the central stalk subunits to proton translocation. Part of the complex F(0) domain. Minor subunit located with subunit a in the membrane. This chain is ATP synthase protein 8 (MT-ATP8), found in Didelphis virginiana (North American opossum).